The primary structure comprises 425 residues: Monoacylglycerol lipase ABHD2 (425 aa).

The Cytoplasmic portion of the chain corresponds to 1–9 (MNAMLETPE). A helical; Signal-anchor for type II membrane protein transmembrane segment spans residues 10–30 (LPAVFDGVKLAAVAAVLYVIV). Over 31–425 (RCLNLKSPTA…DTEQVEADLE (395 aa)) the chain is Extracellular. The AB hydrolase-1 domain occupies 128–382 (MVICPGIANH…HGGHLGFFEG (255 aa)). Residue Asn-136 is glycosylated (N-linked (GlcNAc...) asparagine). Catalysis depends on Ser-207, which acts as the Nucleophile. Residues Asp-345 and His-376 each act as charge relay system in the active site.

This sequence belongs to the AB hydrolase superfamily. AB hydrolase 4 family. As to expression, present in sperm (at protein level).

It localises to the cell projection. It is found in the cilium. Its subcellular location is the flagellum membrane. The protein resides in the cell membrane. The enzyme catalyses an acetyl ester + H2O = an aliphatic alcohol + acetate + H(+). The catalysed reaction is Hydrolyzes glycerol monoesters of long-chain fatty acids.. It carries out the reaction a triacylglycerol + H2O = a diacylglycerol + a fatty acid + H(+). It catalyses the reaction 2-(5Z,8Z,11Z,14Z-eicosatetraenoyl)-glycerol + H2O = glycerol + (5Z,8Z,11Z,14Z)-eicosatetraenoate + H(+). The enzyme catalyses a butanoate ester + H2O = an aliphatic alcohol + butanoate + H(+). The catalysed reaction is hexadecanoate ester + H2O = an aliphatic alcohol + hexadecanoate + H(+). Acylglycerol lipase activity is activated upon binding to progesterone. Functionally, progesterone-dependent acylglycerol lipase that catalyzes hydrolysis of endocannabinoid arachidonoylglycerol (AG) from cell membrane. Acts as a progesterone receptor: progesterone-binding activates the acylglycerol lipase activity, mediating degradation of 1-arachidonoylglycerol (1AG) and 2-arachidonoylglycerol (2AG) to glycerol and arachidonic acid (AA). Also displays an ester hydrolase activity against acetyl ester, butanoate ester and hexadecanoate ester. Plays a key role in sperm capacitation in response to progesterone by mediating degradation of 2AG, an inhibitor of the sperm calcium channel CatSper, leading to calcium influx via CatSper and sperm activation. May also play a role in smooth muscle cells migration. This is Monoacylglycerol lipase ABHD2 from Homo sapiens (Human).